The sequence spans 139 residues: uncharacterized protein (139 aa).

A helical transmembrane segment spans residues 77-97 (YCFFFFLVLFLNGIIATRGKA).

It localises to the mitochondrion membrane. This is an uncharacterized protein from Arabidopsis thaliana (Mouse-ear cress).